We begin with the raw amino-acid sequence, 373 residues long: Dual-specificity RNA methyltransferase RlmN (373 aa).

Glu-94 acts as the Proton acceptor in catalysis. The Radical SAM core domain maps to 100 to 339 (EDDRATLCVS…VIVRKTRGDD (240 aa)). Residues Cys-107 and Cys-344 are joined by a disulfide bond. [4Fe-4S] cluster contacts are provided by Cys-114, Cys-118, and Cys-121. S-adenosyl-L-methionine-binding positions include 168–169 (GE), Ser-200, 222–224 (SIH), and Asn-301. Residue Cys-344 is the S-methylcysteine intermediate of the active site.

This sequence belongs to the radical SAM superfamily. RlmN family. It depends on [4Fe-4S] cluster as a cofactor.

It is found in the cytoplasm. It catalyses the reaction adenosine(2503) in 23S rRNA + 2 reduced [2Fe-2S]-[ferredoxin] + 2 S-adenosyl-L-methionine = 2-methyladenosine(2503) in 23S rRNA + 5'-deoxyadenosine + L-methionine + 2 oxidized [2Fe-2S]-[ferredoxin] + S-adenosyl-L-homocysteine. The enzyme catalyses adenosine(37) in tRNA + 2 reduced [2Fe-2S]-[ferredoxin] + 2 S-adenosyl-L-methionine = 2-methyladenosine(37) in tRNA + 5'-deoxyadenosine + L-methionine + 2 oxidized [2Fe-2S]-[ferredoxin] + S-adenosyl-L-homocysteine. Functionally, specifically methylates position 2 of adenine 2503 in 23S rRNA and position 2 of adenine 37 in tRNAs. m2A2503 modification seems to play a crucial role in the proofreading step occurring at the peptidyl transferase center and thus would serve to optimize ribosomal fidelity. The protein is Dual-specificity RNA methyltransferase RlmN of Shewanella baltica (strain OS155 / ATCC BAA-1091).